Reading from the N-terminus, the 418-residue chain is Secreted beta-glucosidase SUN41 (418 aa).

The signal sequence occupies residues 1 to 23 (MRFSQATVLAFAALSLAAPAFEA). Low complexity predominate over residues 81–97 (SEETSSTSTSISSTTTI). Positions 81-150 (SEETSSTSTS…SGSTNGIEGD (70 aa)) are disordered. An N-linked (GlcNAc...) asparagine glycan is attached at Asn100. Residues 112–126 (SLPSGTIKPSSFATE) are compositionally biased toward polar residues. The segment covering 127 to 136 (SQSQSQSSST) has biased composition (low complexity).

It belongs to the SUN family. In terms of processing, predicted to be a substrate for cleavage by KEX2.

It is found in the secreted. The protein localises to the cell wall. Cell surface beta-glucosidase involved in cytokinesis, cell wall biogenesis, adhesion to host tissue, and biofilm formation; thus playing an important role in the host-pathogen interaction. Has hydrolytic activity on linear (1-&gt;3)-beta-D-glucans such as laminaribiose and other laminarioligosaccharides. The polypeptide is Secreted beta-glucosidase SUN41 (Candida albicans (strain SC5314 / ATCC MYA-2876) (Yeast)).